The sequence spans 241 residues: Probable transcriptional regulatory protein RALTA_A0859 (241 aa).

The protein belongs to the TACO1 family.

Its subcellular location is the cytoplasm. In Cupriavidus taiwanensis (strain DSM 17343 / BCRC 17206 / CCUG 44338 / CIP 107171 / LMG 19424 / R1) (Ralstonia taiwanensis (strain LMG 19424)), this protein is Probable transcriptional regulatory protein RALTA_A0859.